Here is a 219-residue protein sequence, read N- to C-terminus: Phosphate-specific transport system accessory protein PhoU homolog 1 (219 aa).

It belongs to the PhoU family. As to quaternary structure, homodimer.

The protein localises to the cytoplasm. Functionally, plays a role in the regulation of phosphate uptake. In Methanothermobacter thermautotrophicus (strain ATCC 29096 / DSM 1053 / JCM 10044 / NBRC 100330 / Delta H) (Methanobacterium thermoautotrophicum), this protein is Phosphate-specific transport system accessory protein PhoU homolog 1.